Here is an 84-residue protein sequence, read N- to C-terminus: Small ribosomal subunit protein bS20 (84 aa).

It belongs to the bacterial ribosomal protein bS20 family.

Binds directly to 16S ribosomal RNA. The polypeptide is Small ribosomal subunit protein bS20 (Azobacteroides pseudotrichonymphae genomovar. CFP2).